Reading from the N-terminus, the 465-residue chain is Probable dipeptidase A (465 aa).

The active site involves C3.

It belongs to the peptidase C69 family.

It carries out the reaction an L-aminoacyl-L-amino acid + H2O = 2 an L-alpha-amino acid. The polypeptide is Probable dipeptidase A (pepDA) (Streptococcus pyogenes serotype M3 (strain SSI-1)).